A 267-amino-acid polypeptide reads, in one-letter code: S-adenosylmethionine decarboxylase proenzyme (267 aa).

S114 serves as the catalytic Schiff-base intermediate with substrate; via pyruvic acid. S114 is subject to Pyruvic acid (Ser); by autocatalysis. H119 acts as the Proton acceptor; for processing activity in catalysis. The Proton donor; for catalytic activity role is filled by C142.

This sequence belongs to the prokaryotic AdoMetDC family. Type 2 subfamily. In terms of assembly, heterooctamer of four alpha and four beta chains arranged as a tetramer of alpha/beta heterodimers. It depends on pyruvate as a cofactor. Post-translationally, is synthesized initially as an inactive proenzyme. Formation of the active enzyme involves a self-maturation process in which the active site pyruvoyl group is generated from an internal serine residue via an autocatalytic post-translational modification. Two non-identical subunits are generated from the proenzyme in this reaction, and the pyruvate is formed at the N-terminus of the alpha chain, which is derived from the carboxyl end of the proenzyme. The post-translation cleavage follows an unusual pathway, termed non-hydrolytic serinolysis, in which the side chain hydroxyl group of the serine supplies its oxygen atom to form the C-terminus of the beta chain, while the remainder of the serine residue undergoes an oxidative deamination to produce ammonia and the pyruvoyl group blocking the N-terminus of the alpha chain.

It carries out the reaction S-adenosyl-L-methionine + H(+) = S-adenosyl 3-(methylsulfanyl)propylamine + CO2. Its pathway is amine and polyamine biosynthesis; S-adenosylmethioninamine biosynthesis; S-adenosylmethioninamine from S-adenosyl-L-methionine: step 1/1. In terms of biological role, catalyzes the decarboxylation of S-adenosylmethionine to S-adenosylmethioninamine (dcAdoMet), the propylamine donor required for the synthesis of the polyamines spermine and spermidine from the diamine putrescine. The protein is S-adenosylmethionine decarboxylase proenzyme of Erwinia tasmaniensis (strain DSM 17950 / CFBP 7177 / CIP 109463 / NCPPB 4357 / Et1/99).